The chain runs to 780 residues: Kojibiose phosphorylase (780 aa).

354–355 (WD) is a substrate binding site. Glutamate 496 acts as the Proton donor in catalysis. Position 608-609 (608-609 (KQ)) interacts with substrate.

The protein belongs to the glycosyl hydrolase 65 family.

The catalysed reaction is kojibiose + phosphate = beta-D-glucose 1-phosphate + D-glucose. Catalyzes the reversible phosphorolysis of kojibiose into beta-D-glucose 1-phosphate (Glc1P) and D-glucose. In the reverse direction, uses Glc1P as acceptor to produce alpha-1,2-glucans up to a degree of polymerization of 6. The protein is Kojibiose phosphorylase of Halothermothrix orenii (strain H 168 / OCM 544 / DSM 9562).